Consider the following 219-residue polypeptide: Translation initiation factor 6 (219 aa).

Belongs to the eIF-6 family.

Binds to the 50S ribosomal subunit and prevents its association with the 30S ribosomal subunit to form the 70S initiation complex. This chain is Translation initiation factor 6, found in Methanosarcina mazei (strain ATCC BAA-159 / DSM 3647 / Goe1 / Go1 / JCM 11833 / OCM 88) (Methanosarcina frisia).